We begin with the raw amino-acid sequence, 510 residues long: NAD(P)H-quinone oxidoreductase subunit 2 A, chloroplastic (510 aa).

13 helical membrane passes run 24 to 44, 57 to 77, 99 to 119, 124 to 144, 149 to 169, 183 to 203, 229 to 249, 295 to 315, 323 to 343, 354 to 374, 395 to 415, 418 to 438, and 484 to 504; these read LLLF…GLIL, TPWL…ALLF, IFQF…VEYI, MAIT…MFLC, LITI…LSGY, YLLM…WLYG, ISIA…PAPF, WHLL…LIAI, MLAY…IVGD, YMLF…LFGL, ALSS…AGFF, LYLF…IGLL, and MIVC…IIAI.

It belongs to the complex I subunit 2 family. As to quaternary structure, NDH is composed of at least 16 different subunits, 5 of which are encoded in the nucleus.

It is found in the plastid. Its subcellular location is the chloroplast thylakoid membrane. The enzyme catalyses a plastoquinone + NADH + (n+1) H(+)(in) = a plastoquinol + NAD(+) + n H(+)(out). The catalysed reaction is a plastoquinone + NADPH + (n+1) H(+)(in) = a plastoquinol + NADP(+) + n H(+)(out). Functionally, NDH shuttles electrons from NAD(P)H:plastoquinone, via FMN and iron-sulfur (Fe-S) centers, to quinones in the photosynthetic chain and possibly in a chloroplast respiratory chain. The immediate electron acceptor for the enzyme in this species is believed to be plastoquinone. Couples the redox reaction to proton translocation, and thus conserves the redox energy in a proton gradient. This chain is NAD(P)H-quinone oxidoreductase subunit 2 A, chloroplastic, found in Nuphar advena (Common spatterdock).